We begin with the raw amino-acid sequence, 186 residues long: uncharacterized protein (186 aa).

The next 4 helical transmembrane spans lie at 5 to 25 (LIAC…FEDI), 39 to 59 (IITI…KLFA), 62 to 82 (NLLF…ILLF), and 122 to 142 (GFFE…IALM).

Its subcellular location is the cell membrane. This is an uncharacterized protein from Borreliella burgdorferi (strain ATCC 35210 / DSM 4680 / CIP 102532 / B31) (Borrelia burgdorferi).